The chain runs to 368 residues: tRNA(Met) cytidine acetate ligase (368 aa).

ATP is bound by residues 7-20 (IAEF…HKYL), G96, N152, and R175.

It belongs to the TmcAL family.

It is found in the cytoplasm. The enzyme catalyses cytidine(34) in elongator tRNA(Met) + acetate + ATP = N(4)-acetylcytidine(34) in elongator tRNA(Met) + AMP + diphosphate. Its function is as follows. Catalyzes the formation of N(4)-acetylcytidine (ac(4)C) at the wobble position of elongator tRNA(Met), using acetate and ATP as substrates. First activates an acetate ion to form acetyladenylate (Ac-AMP) and then transfers the acetyl group to tRNA to form ac(4)C34. This Streptococcus pyogenes serotype M1 protein is tRNA(Met) cytidine acetate ligase.